Here is a 327-residue protein sequence, read N- to C-terminus: PDZ and LIM domain protein 1 (327 aa).

The residue at position 2 (T2) is an N-acetylthreonine. The 83-residue stretch at 3 to 85 (TQQIVLQGPG…NMTLTVSRSE (83 aa)) folds into the PDZ domain. A phosphoserine mark is found at S90 and S130. A Phosphotyrosine modification is found at Y142. Residues 161–184 (VESKTSASGEEANSRPVVQPHPSG) form a disordered region. In terms of domain architecture, LIM zinc-binding spans 256–315 (PICDKCGTGIVGVFVKLRDHHRHPECYVCTDCGINLKQKGHFFVEDQIYCEKHARERVTP). Zn(2+) contacts are provided by C258, C261, H278, C281, C284, C287, C305, and H308. Phosphothreonine is present on T314. Y319 is modified (phosphotyrosine).

Interacts with ACTN1, ACTN2 and ACTN4. Interacts with PDLIM4. Expressed in heart, lung, spleen, testis and skeletal muscle.

The protein resides in the cytoplasm. The protein localises to the cytoskeleton. Its subcellular location is the myofibril. It localises to the sarcomere. It is found in the z line. Cytoskeletal protein that may act as an adapter that brings other proteins (like kinases) to the cytoskeleton. Involved in assembly, disassembly and directioning of stress fibers in fibroblasts. Required for the localization of ACTN1 and PALLD to stress fibers. Required for cell migration and in maintaining cell polarity of fibroblasts. The protein is PDZ and LIM domain protein 1 (Pdlim1) of Mus musculus (Mouse).